We begin with the raw amino-acid sequence, 293 residues long: Prohibitin-2 (293 aa).

The helical; Signal-anchor for type II membrane protein transmembrane segment at 21-41 threads the bilayer; it reads FGGGFGLLALGGVGLLALSSL. A coiled-coil region spans residues 190-235; it reads GREYAAAIEAKQVAQQEAERARFLVEKALQDKRSIIVKAEGEAQSA.

This sequence belongs to the prohibitin family. The mitochondrial prohibitin complex consists of two subunits (PHB1 and PHB2), assembled into a membrane-associated ring-shaped supercomplex of approximately 1 mDa.

The protein localises to the mitochondrion inner membrane. Its subcellular location is the cytoplasm. It localises to the nucleus. The protein resides in the cell membrane. Its function is as follows. Protein with pleiotropic attributes mediated in a cell-compartment- and tissue-specific manner, which include the plasma membrane-associated cell signaling functions, mitochondrial chaperone, and transcriptional co-regulator of transcription factors and sex steroid hormones in the nucleus. In the mitochondria, together with PHB, forms large ring complexes (prohibitin complexes) in the inner mitochondrial membrane (IMM) and functions as a chaperone protein that stabilizes mitochondrial respiratory enzymes and maintains mitochondrial integrity in the IMM, which is required for mitochondrial morphogenesis, neuronal survival, and normal lifespan. Functionally, in the nucleus, serves as transcriptional co-regulator. This Dictyostelium discoideum (Social amoeba) protein is Prohibitin-2 (phbB).